A 447-amino-acid chain; its full sequence is N-succinylarginine dihydrolase (447 aa).

Residues 19–28 (AGLSVGNKAS), Asn-110, and 137–138 (HR) contribute to the substrate site. The active site involves Glu-174. Arg-213 lines the substrate pocket. His-249 is an active-site residue. 2 residues coordinate substrate: Asp-251 and Asn-365. Cys-371 (nucleophile) is an active-site residue.

This sequence belongs to the succinylarginine dihydrolase family. As to quaternary structure, homodimer.

The enzyme catalyses N(2)-succinyl-L-arginine + 2 H2O + 2 H(+) = N(2)-succinyl-L-ornithine + 2 NH4(+) + CO2. Its pathway is amino-acid degradation; L-arginine degradation via AST pathway; L-glutamate and succinate from L-arginine: step 2/5. Catalyzes the hydrolysis of N(2)-succinylarginine into N(2)-succinylornithine, ammonia and CO(2). In Photorhabdus laumondii subsp. laumondii (strain DSM 15139 / CIP 105565 / TT01) (Photorhabdus luminescens subsp. laumondii), this protein is N-succinylarginine dihydrolase.